The sequence spans 304 residues: UDP-3-O-acyl-N-acetylglucosamine deacetylase (304 aa).

Histidine 78, histidine 237, and aspartate 241 together coordinate Zn(2+). Residue histidine 264 is the Proton donor of the active site.

It belongs to the LpxC family. Zn(2+) is required as a cofactor.

The catalysed reaction is a UDP-3-O-[(3R)-3-hydroxyacyl]-N-acetyl-alpha-D-glucosamine + H2O = a UDP-3-O-[(3R)-3-hydroxyacyl]-alpha-D-glucosamine + acetate. The protein operates within glycolipid biosynthesis; lipid IV(A) biosynthesis; lipid IV(A) from (3R)-3-hydroxytetradecanoyl-[acyl-carrier-protein] and UDP-N-acetyl-alpha-D-glucosamine: step 2/6. Its function is as follows. Catalyzes the hydrolysis of UDP-3-O-myristoyl-N-acetylglucosamine to form UDP-3-O-myristoylglucosamine and acetate, the committed step in lipid A biosynthesis. This Legionella pneumophila (strain Lens) protein is UDP-3-O-acyl-N-acetylglucosamine deacetylase.